The following is a 689-amino-acid chain: MSEKTFLVEIGTEELPPKALRSLAESFAANFTVELDNAGLAHGTVQWFAAPRRLTLKVANLAEAQPDREIEKRGPAIAQAFDAEGKPSKAAEGWARGCGITVDQAERLTTDKGEWLLYRAHVKGESTEALLPNMVATSLAKLPIPKLMRWGASDVHFVRPVHTVTLLLGDKVIPATILGIQSDRVIRGHRFMGEPEFTIDNADQYPEILRERGKVIADYEERKAKIKADAEEAARKIGGNADLSESLLEEVASLVEWPVVLTAKFEEKFLAVPAEALVYTMKGDQKYFPVYANDGKLLPNFIFVANIESKDPQQIISGNEKVVRPRLADAEFFFNTDRKKRLEDNLPRLQTVLFQQQLGTLRDKTDRIQALAGWIAEQIGADVNHATRAGLLSKCDLMTNMVFEFTDTQGVMGMHYARHDGEAEDVAVALNEQYQPRFAGDDLPSNPVACALAIADKMDTLAGIFGIGQHPKGDKDPFALRRAALGVLRIIVEKNLNLDLQTLTEEAVRLYGDKLTNANVVDDVIDFMLGRFRAWYQDEGYTVDTIQAVLARRPTRPADFDARMKAVSHFRTLDAAAALAAANKRVSNILAKSDEVLSDRVNASTLKEPEEIKLAMQVVVLRDKLEPYFAEGRYQDALVELAELREPVDAFFDKVMVMVDDKELRLNRLTMLEKLRELFLRVADISLLQ.

Belongs to the class-II aminoacyl-tRNA synthetase family. In terms of assembly, tetramer of two alpha and two beta subunits.

It localises to the cytoplasm. The catalysed reaction is tRNA(Gly) + glycine + ATP = glycyl-tRNA(Gly) + AMP + diphosphate. This is Glycine--tRNA ligase beta subunit from Shigella boydii serotype 18 (strain CDC 3083-94 / BS512).